The primary structure comprises 166 residues: NAD(P)H-quinone oxidoreductase subunit I, chloroplastic (166 aa).

2 consecutive 4Fe-4S ferredoxin-type domains span residues 55–84 (GRIHFEFDKCIACEVCVRVCPIDLPVVDWK) and 95–124 (LNYSIDFGICIFCGNCVEYCPTNCLSMTEE). Residues Cys64, Cys67, Cys70, Cys74, Cys104, Cys107, Cys110, and Cys114 each coordinate [4Fe-4S] cluster.

Belongs to the complex I 23 kDa subunit family. As to quaternary structure, NDH is composed of at least 16 different subunits, 5 of which are encoded in the nucleus. It depends on [4Fe-4S] cluster as a cofactor.

The protein localises to the plastid. It is found in the chloroplast thylakoid membrane. The enzyme catalyses a plastoquinone + NADH + (n+1) H(+)(in) = a plastoquinol + NAD(+) + n H(+)(out). It catalyses the reaction a plastoquinone + NADPH + (n+1) H(+)(in) = a plastoquinol + NADP(+) + n H(+)(out). NDH shuttles electrons from NAD(P)H:plastoquinone, via FMN and iron-sulfur (Fe-S) centers, to quinones in the photosynthetic chain and possibly in a chloroplast respiratory chain. The immediate electron acceptor for the enzyme in this species is believed to be plastoquinone. Couples the redox reaction to proton translocation, and thus conserves the redox energy in a proton gradient. This chain is NAD(P)H-quinone oxidoreductase subunit I, chloroplastic, found in Laphamia lindheimeri (Lindheimer's rockdaisy).